Consider the following 270-residue polypeptide: Glutamate racemase (270 aa).

Residues 14-15 (DS) and 46-47 (YG) contribute to the substrate site. Cysteine 77 acts as the Proton donor/acceptor in catalysis. Residue 78–79 (NT) coordinates substrate. Cysteine 189 acts as the Proton donor/acceptor in catalysis. 190–191 (TH) lines the substrate pocket.

The protein belongs to the aspartate/glutamate racemases family.

It catalyses the reaction L-glutamate = D-glutamate. The protein operates within cell wall biogenesis; peptidoglycan biosynthesis. Functionally, provides the (R)-glutamate required for cell wall biosynthesis. This Neisseria gonorrhoeae (strain ATCC 700825 / FA 1090) protein is Glutamate racemase.